The sequence spans 422 residues: L-threonine dehydratase biosynthetic IlvA (422 aa).

The residue at position 56 (Lys-56) is an N6-(pyridoxal phosphate)lysine. Residues Asn-83, 189 to 193 (GGGGL), and Ser-315 contribute to the pyridoxal 5'-phosphate site. An ACT-like domain is found at 339-413 (HYFILNFPQR…FDPSNIYINE (75 aa)).

The protein belongs to the serine/threonine dehydratase family. Homotetramer. Pyridoxal 5'-phosphate is required as a cofactor.

It carries out the reaction L-threonine = 2-oxobutanoate + NH4(+). It functions in the pathway amino-acid biosynthesis; L-isoleucine biosynthesis; 2-oxobutanoate from L-threonine: step 1/1. Functionally, catalyzes the anaerobic formation of alpha-ketobutyrate and ammonia from threonine in a two-step reaction. The first step involved a dehydration of threonine and a production of enamine intermediates (aminocrotonate), which tautomerizes to its imine form (iminobutyrate). Both intermediates are unstable and short-lived. The second step is the nonenzymatic hydrolysis of the enamine/imine intermediates to form 2-ketobutyrate and free ammonia. In the low water environment of the cell, the second step is accelerated by RidA. The sequence is that of L-threonine dehydratase biosynthetic IlvA (ilvA) from Staphylococcus aureus (strain NCTC 8325 / PS 47).